The sequence spans 112 residues: MEAHSEHLCLRMIRLNADEMEEPLLHYMSYERLVNTYERYKSIGIVAEIAKRVFVETRILMTKVSTAQCMKPGREKRWKGSVRRRSLENFRLRGGIQWYSHACRGMAIGLQN.

The protein belongs to the UPF0329 family.

The sequence is that of UPF0329 protein ECU11_0080 from Encephalitozoon cuniculi (strain GB-M1) (Microsporidian parasite).